Consider the following 74-residue polypeptide: Cytochrome b (74 aa).

Residues 34–54 (FGSLLAICLVTQILTGLLLAM) form a helical membrane-spanning segment.

The protein belongs to the cytochrome b family. The cytochrome bc1 complex contains 11 subunits: 3 respiratory subunits (MT-CYB, CYC1 and UQCRFS1), 2 core proteins (UQCRC1 and UQCRC2) and 6 low-molecular weight proteins (UQCRH/QCR6, UQCRB/QCR7, UQCRQ/QCR8, UQCR10/QCR9, UQCR11/QCR10 and a cleavage product of UQCRFS1). This cytochrome bc1 complex then forms a dimer. The cofactor is heme.

The protein resides in the mitochondrion inner membrane. Its function is as follows. Component of the ubiquinol-cytochrome c reductase complex (complex III or cytochrome b-c1 complex) that is part of the mitochondrial respiratory chain. The b-c1 complex mediates electron transfer from ubiquinol to cytochrome c. Contributes to the generation of a proton gradient across the mitochondrial membrane that is then used for ATP synthesis. This chain is Cytochrome b (MT-CYB), found in Anser caerulescens (Snow goose).